A 147-amino-acid chain; its full sequence is Endoribonuclease YbeY (147 aa).

The Zn(2+) site is built by H108, H112, and H118.

This sequence belongs to the endoribonuclease YbeY family. Zn(2+) is required as a cofactor.

The protein localises to the cytoplasm. In terms of biological role, single strand-specific metallo-endoribonuclease involved in late-stage 70S ribosome quality control and in maturation of the 3' terminus of the 16S rRNA. The chain is Endoribonuclease YbeY from Sulfurovum sp. (strain NBC37-1).